The primary structure comprises 228 residues: MKKFFLASSILSADFARLGEDTKKAIDAGSDWIHFDVMDNHYVPNLTMGPMILKALRNYNITVPIDVHLMVKPVDNLIPQFAEAGADFITFHPESTDHIDRTLNLIKECGCKAGLALNPATSLNFLDYVMEKLDLILLMSVNPGFGNQSFLPTSFNKLREVRKKIELNSSNILLEVDGGVKLENISEVAFSGANVFVIGSGIFGYTDYNVIIKKIRKKLKNVYSTSIH.

Residue Ser9 coordinates substrate. The a divalent metal cation site is built by His34, Asp36, His68, and Asp177. Catalysis depends on Asp36, which acts as the Proton acceptor. Residues His68, 177–179 (DGG), and 199–200 (GS) each bind substrate. The active-site Proton donor is Asp177.

The protein belongs to the ribulose-phosphate 3-epimerase family. It depends on a divalent metal cation as a cofactor.

It catalyses the reaction D-ribulose 5-phosphate = D-xylulose 5-phosphate. The protein operates within carbohydrate degradation. Its function is as follows. Catalyzes the reversible epimerization of D-ribulose 5-phosphate to D-xylulose 5-phosphate. The chain is Ribulose-phosphate 3-epimerase from Buchnera aphidicola subsp. Schizaphis graminum (strain Sg).